The sequence spans 80 residues: MPFRFGTQPRRFPVEGGDSSIELESGLSSSASCNGKETSPNRQLRRCPGSHCLTITDVPITVYATMRKPPAQSSKEMRPK.

Residues 1–45 (MPFRFGTQPRRFPVEGGDSSIELESGLSSSASCNGKETSPNRQLR) form a disordered region. Over residues 15–32 (EGGDSSIELESGLSSSAS) the composition is skewed to low complexity. Over residues 33-42 (CNGKETSPNR) the composition is skewed to polar residues.

It belongs to the FAM229 family.

The polypeptide is Protein FAM229B (Fam229b) (Rattus norvegicus (Rat)).